The following is a 90-amino-acid chain: Small ribosomal subunit protein bS16 (90 aa).

It belongs to the bacterial ribosomal protein bS16 family.

This is Small ribosomal subunit protein bS16 from Lactobacillus helveticus (strain DPC 4571).